Reading from the N-terminus, the 160-residue chain is MTSADRRRDAVARIIRARRIGTQEELLAALERAGFRATQATLSRDLARLGARRVSGPEGAVYELGADGADGGLAALRGLVSSIAANASMVVIRTHPGSAPAIARAIDLAQPPEVLGTIAGDDTIFVAPAGELRPRRLAARLAELLGTPSALAGDGGERTH.

This sequence belongs to the ArgR family.

The protein resides in the cytoplasm. It functions in the pathway amino-acid biosynthesis; L-arginine biosynthesis [regulation]. Its function is as follows. Regulates arginine biosynthesis genes. The chain is Arginine repressor from Anaeromyxobacter sp. (strain K).